Reading from the N-terminus, the 578-residue chain is GRAM domain-containing protein 4 (578 aa).

Positions 83 to 135 (HLEIALLEKHFLQEELRKLREETNIDTLKQELEKERQRRTELEQKITDIAKTR) form a coiled coil. Residues 132-157 (AKTRTDESATQQLSKGPSQTNGADKQ) form a disordered region. Residues 139–154 (SATQQLSKGPSQTNGA) show a composition bias toward polar residues. Helical transmembrane passes span 236-256 (IAFI…MFLF), 334-354 (MTQK…FFHY), and 356-376 (TIGL…DFIF). A GRAM domain is found at 446-524 (SSFHEIFSLL…TDITDIQKYK (79 aa)).

Its subcellular location is the mitochondrion membrane. It is found in the endoplasmic reticulum membrane. Plays a role as a mediator of e2f1-induced apoptosis in the absence of p53/TP53. In Xenopus laevis (African clawed frog), this protein is GRAM domain-containing protein 4 (gramd4).